A 372-amino-acid polypeptide reads, in one-letter code: Pyruvylated Gal-beta-1,3-epitope synthesis protein 5 (372 aa).

Over 1 to 12 (MGLPLRIFAGNG) the chain is Cytoplasmic. The chain crosses the membrane as a helical; Signal-anchor for type II membrane protein span at residues 13 to 35 (IGGWCLRLFLFGSLILLLRPLIF). Topologically, residues 36–372 (YSNTTMKKLK…LRIIEQWKQL (337 aa)) are lumenal. N-linked (GlcNAc...) asparagine glycans are attached at residues N38 and N128.

Its subcellular location is the golgi apparatus membrane. In terms of biological role, involved in cell wall biogenesis. Has a role in the addition of Gal-beta1,3 moeities to galactomannans and their subsequent pyruvylation. Has a role in meiosis. The polypeptide is Pyruvylated Gal-beta-1,3-epitope synthesis protein 5 (pvg5) (Schizosaccharomyces pombe (strain 972 / ATCC 24843) (Fission yeast)).